The primary structure comprises 329 residues: Peroxidase 56 (329 aa).

A signal peptide spans 1–31; that stretch reads MAALKMTISCFLFLQVIYCLLSSFAPTNVQG. 4 cysteine pairs are disulfide-bonded: Cys-41–Cys-119, Cys-74–Cys-79, Cys-125–Cys-325, and Cys-204–Cys-236. His-72 acts as the Proton acceptor in catalysis. 5 residues coordinate Ca(2+): Asp-73, Val-76, Gly-78, Glu-80, and Ser-82. The N-linked (GlcNAc...) asparagine glycan is linked to Asn-158. Pro-167 serves as a coordination point for substrate. N-linked (GlcNAc...) asparagine glycosylation occurs at Asn-172. His-197 lines the heme b pocket. Thr-198 provides a ligand contact to Ca(2+). Asn-213 carries an N-linked (GlcNAc...) asparagine glycan. 3 residues coordinate Ca(2+): Asp-248, Ser-251, and Asp-256.

The protein belongs to the peroxidase family. Classical plant (class III) peroxidase subfamily. Requires heme b as cofactor. It depends on Ca(2+) as a cofactor.

The protein localises to the secreted. It catalyses the reaction 2 a phenolic donor + H2O2 = 2 a phenolic radical donor + 2 H2O. Its function is as follows. Removal of H(2)O(2), oxidation of toxic reductants, biosynthesis and degradation of lignin, suberization, auxin catabolism, response to environmental stresses such as wounding, pathogen attack and oxidative stress. These functions might be dependent on each isozyme/isoform in each plant tissue. The polypeptide is Peroxidase 56 (PER56) (Arabidopsis thaliana (Mouse-ear cress)).